A 706-amino-acid polypeptide reads, in one-letter code: Frizzled-6 (706 aa).

Residues 1–18 form the signal peptide; the sequence is MEMFTFLLTCIFLPLLRG. Positions 19–132 constitute an FZ domain; it reads HSLFTCEPIT…CDRLQYCDET (114 aa). The Extracellular portion of the chain corresponds to 19–201; sequence HSLFTCEPIT…SDELEFAKSF (183 aa). 5 cysteine pairs are disulfide-bonded: C24–C85, C32–C78, C69–C106, C95–C129, and C99–C123. N38 carries an N-linked (GlcNAc...) asparagine glycan. Residues 202-222 form a helical membrane-spanning segment; it reads IGTVSIFCLCATLFTFLTFLI. At 223 to 233 the chain is on the cytoplasmic side; it reads DVRRFRYPERP. Residues 234-254 traverse the membrane as a helical segment; the sequence is IIYYSVCYSIVSLMYFIGFLL. The Extracellular portion of the chain corresponds to 255–284; the sequence is GDSTACNKADEKLELGDTVVLGSQNKACTV. A helical membrane pass occupies residues 285 to 305; it reads LFMLLYFFTMAGTVWWVILTI. Topologically, residues 306–324 are cytoplasmic; sequence TWFLAAGRKWSCEAIEQKA. The chain crosses the membrane as a helical span at residues 325 to 345; the sequence is VWFHAVAWGTPGFLTVMLLAM. Over 346-370 the chain is Extracellular; sequence NKVEGDNISGVCFVGLYDLDASRYF. N352 carries an N-linked (GlcNAc...) asparagine glycan. A helical membrane pass occupies residues 371 to 391; sequence VLLPLCLCVFVGLSLLLAGII. Residues 392–416 lie on the Cytoplasmic side of the membrane; that stretch reads SLNHVRQVIQHDGRNQEKLKKFMIR. Residues 417-437 form a helical membrane-spanning segment; it reads IGVFSGLYLVPLVTLLGCYVY. Over 438–473 the chain is Extracellular; it reads EQVNRITWEITWVSDHCRQYHIPCPYQAKAKARPEL. A helical membrane pass occupies residues 474 to 494; sequence ALFMIKYLMTLIVGISAVFWV. Residues 495–706 lie on the Cytoplasmic side of the membrane; the sequence is GSKKTCTEWA…EQGGGCHSDT (212 aa). The Lys-Thr-X-X-X-Trp motif, mediates interaction with the PDZ domain of Dvl family members motif lies at 498 to 503; sequence KTCTEW. The tract at residues 588 to 706 is disordered; it reads EIQTSPETSM…EQGGGCHSDT (119 aa). Residues 646–658 show a composition bias toward basic and acidic residues; it reads ARSEGRISPKSDI. The residue at position 653 (S653) is a Phosphoserine. Over residues 662–672 the composition is skewed to polar residues; that stretch reads GLAQSNNLQVP. Over residues 673 to 685 the composition is skewed to low complexity; the sequence is SSSEPSSLKGSTS. Residues 694-706 show a composition bias toward basic and acidic residues; it reads VRKEQGGGCHSDT.

This sequence belongs to the G-protein coupled receptor Fz/Smo family. In terms of assembly, interacts with LMBR1L. In terms of processing, ubiquitinated by ZNRF3, leading to its degradation by the proteasome. In terms of tissue distribution, detected in adult heart, brain, placenta, lung, liver, skeletal muscle, kidney, pancreas, thymus, prostate, testis, ovary, small intestine and colon. In the fetus, expressed in brain, lung, liver and kidney.

The protein resides in the membrane. It localises to the cell membrane. The protein localises to the cell surface. Its subcellular location is the apical cell membrane. It is found in the cytoplasmic vesicle membrane. The protein resides in the endoplasmic reticulum membrane. In terms of biological role, receptor for Wnt proteins. Most of frizzled receptors are coupled to the beta-catenin canonical signaling pathway, which leads to the activation of disheveled proteins, inhibition of GSK-3 kinase, nuclear accumulation of beta-catenin and activation of Wnt target genes. A second signaling pathway involving PKC and calcium fluxes has been seen for some family members, but it is not yet clear if it represents a distinct pathway or if it can be integrated in the canonical pathway, as PKC seems to be required for Wnt-mediated inactivation of GSK-3 kinase. Both pathways seem to involve interactions with G-proteins. May be involved in transduction and intercellular transmission of polarity information during tissue morphogenesis and/or in differentiated tissues. Together with FZD3, is involved in the neural tube closure and plays a role in the regulation of the establishment of planar cell polarity (PCP), particularly in the orientation of asymmetric bundles of stereocilia on the apical faces of a subset of auditory and vestibular sensory cells located in the inner ear. The polypeptide is Frizzled-6 (FZD6) (Homo sapiens (Human)).